The following is a 111-amino-acid chain: Probable 4-amino-4-deoxy-L-arabinose-phosphoundecaprenol flippase subunit ArnE (111 aa).

Residues 1–37 (MIWLTLVFASLLSVAGQLCQKQATCFVAINKRRKHIA) are Cytoplasmic-facing. The chain crosses the membrane as a helical span at residues 38-58 (LWLGLALACLGLAMVLWLLVL). The 70-residue stretch at 40–109 (LGLALACLGL…IIGGIVILGS (70 aa)) folds into the EamA domain. Topologically, residues 59-60 (QN) are periplasmic. The helical transmembrane segment at 61–81 (VPVGIAYPMLSLNFVWVTLAA) threads the bilayer. At 82–87 (VKLWHE) the chain is on the cytoplasmic side. The chain crosses the membrane as a helical span at residues 88-108 (PVSPRHWCGVAFIIGGIVILG). The Periplasmic segment spans residues 109-111 (STV).

It belongs to the ArnE family. As to quaternary structure, heterodimer of ArnE and ArnF.

It is found in the cell inner membrane. Its pathway is bacterial outer membrane biogenesis; lipopolysaccharide biosynthesis. Functionally, translocates 4-amino-4-deoxy-L-arabinose-phosphoundecaprenol (alpha-L-Ara4N-phosphoundecaprenol) from the cytoplasmic to the periplasmic side of the inner membrane. This Escherichia coli (strain 55989 / EAEC) protein is Probable 4-amino-4-deoxy-L-arabinose-phosphoundecaprenol flippase subunit ArnE.